We begin with the raw amino-acid sequence, 330 residues long: GMP reductase (330 aa).

The Thioimidate intermediate role is filled by Cys180. Residue 209 to 232 coordinates NADP(+); it reads LIADGGIRHNGDIAKSVRFGASMV.

The protein belongs to the IMPDH/GMPR family. GuaC type 2 subfamily.

It carries out the reaction IMP + NH4(+) + NADP(+) = GMP + NADPH + 2 H(+). In terms of biological role, catalyzes the irreversible NADPH-dependent deamination of GMP to IMP. It functions in the conversion of nucleobase, nucleoside and nucleotide derivatives of G to A nucleotides, and in maintaining the intracellular balance of A and G nucleotides. The sequence is that of GMP reductase from Lactobacillus delbrueckii subsp. bulgaricus (strain ATCC 11842 / DSM 20081 / BCRC 10696 / JCM 1002 / NBRC 13953 / NCIMB 11778 / NCTC 12712 / WDCM 00102 / Lb 14).